Reading from the N-terminus, the 318-residue chain is RPPVTEVESQNYYHFHDNRVLPSHVDEALANSEGWWYKPDFIINDLNVQSAIGYPAHEEVVPLVAGTYAVRGYARGHGNKIIRCEVSLDDGKSWRLGSVTHEGQPTEYGKHWGWVWWSLEVPIAELLTTPEIICRAWDSSMNTQPNTFTWNVMGMMNNCCYRVKIHPRQTTDGRFALQFEHPTIAGPTVGGWMNRAEDVAAAAAVTVAPPPAPAGAKSFTMAEVETHTTMESAWFVVDGKVYDATPFLKDHPGGADSILLVAGIDATDEFNAIHSLKAKKQLLEYYIGELAEEGQEAAASDRATPGPAAAIGTAVPVA.

A Cytochrome b5 heme-binding domain is found at 216 to 291; sequence AKSFTMAEVE…LLEYYIGELA (76 aa). Heme is bound by residues His251 and His274.

The protein belongs to the nitrate reductase family. In terms of assembly, homodimer. The cofactor is FAD. Requires heme as cofactor. Mo-molybdopterin serves as cofactor.

It carries out the reaction nitrite + NAD(+) + H2O = nitrate + NADH + H(+). Functionally, nitrate reductase is a key enzyme involved in the first step of nitrate assimilation in plants, fungi and bacteria. The polypeptide is Nitrate reductase [NADH] (Chlorella vulgaris (Green alga)).